Here is a 178-residue protein sequence, read N- to C-terminus: S-alkylcysteine N-acetyltransferase (178 aa).

Residues 4–163 enclose the N-acetyltransferase domain; sequence DIFRLATVED…IGVMMHKVLI (160 aa).

The protein belongs to the acetyltransferase family.

The enzyme catalyses an S-substituted L-cysteine + acetyl-CoA = an N-acetyl-L-cysteine-S-conjugate + CoA + H(+). It catalyses the reaction S-benzyl-L-cysteine + acetyl-CoA = N-acetyl-S-benzyl-L-cysteine + CoA + H(+). The catalysed reaction is S-methyl-L-cysteine + acetyl-CoA = N-acetyl-S-methyl-L-cysteine + CoA + H(+). It functions in the pathway amino-acid metabolism. Functionally, involved in a cysteine salvage pathway from S-alkylcysteine. Catalyzes the first step in this pathway, i.e. the amine acetylation of an S-alkylcysteine with a preference for S-benzyl-L-cysteine over S-methyl-L-cysteine. This pathway is likely important in the catabolism of alkylated cysteine generated by proteolysis of alkylated glutathione formed in the detoxification of a wide range of electrophiles. The sequence is that of S-alkylcysteine N-acetyltransferase from Bacillus subtilis (strain 168).